The sequence spans 423 residues: Lipoamide acyltransferase component of branched-chain alpha-keto acid dehydrogenase complex (423 aa).

The region spanning 3–78 (THVIKMPDIG…AVGSELIRIE (76 aa)) is the Lipoyl-binding domain. Lys-44 carries the N6-lipoyllysine modification. The region spanning 137–174 (LASPAVRKRALDAGIELRYVHGSGPAGRILHEDLDAFM) is the Peripheral subunit-binding (PSBD) domain. Residues His-395 and Asp-399 contribute to the active site.

The protein belongs to the 2-oxoacid dehydrogenase family. As to quaternary structure, forms a 24-polypeptide structural core with octahedral symmetry. The cofactor is (R)-lipoate.

The catalysed reaction is N(6)-[(R)-dihydrolipoyl]-L-lysyl-[protein] + 2-methylpropanoyl-CoA = N(6)-[(R)-S(8)-2-methylpropanoyldihydrolipoyl]-L-lysyl-[protein] + CoA. Functionally, the branched-chain alpha-keto dehydrogenase complex catalyzes the overall conversion of alpha-keto acids to acyl-CoA and CO(2). It contains multiple copies of three enzymatic components: branched-chain alpha-keto acid decarboxylase (E1), lipoamide acyltransferase (E2) and lipoamide dehydrogenase (E3). The chain is Lipoamide acyltransferase component of branched-chain alpha-keto acid dehydrogenase complex (bkdB) from Pseudomonas putida (Arthrobacter siderocapsulatus).